A 117-amino-acid chain; its full sequence is Large ribosomal subunit protein bL19 (117 aa).

Belongs to the bacterial ribosomal protein bL19 family.

In terms of biological role, this protein is located at the 30S-50S ribosomal subunit interface and may play a role in the structure and function of the aminoacyl-tRNA binding site. This Colwellia psychrerythraea (strain 34H / ATCC BAA-681) (Vibrio psychroerythus) protein is Large ribosomal subunit protein bL19.